We begin with the raw amino-acid sequence, 930 residues long: uncharacterized protein (930 aa).

A signal peptide spans 1-20 (MPSFVLWTFHLCSQWFQGLT). 8 N-linked (GlcNAc...) asparagine glycosylation sites follow: asparagine 137, asparagine 146, asparagine 164, asparagine 210, asparagine 257, asparagine 628, asparagine 717, and asparagine 799.

The protein resides in the secreted. This is an uncharacterized protein from Arthroderma benhamiae (strain ATCC MYA-4681 / CBS 112371) (Trichophyton mentagrophytes).